A 734-amino-acid polypeptide reads, in one-letter code: Photosystem I P700 chlorophyll a apoprotein A2 (734 aa).

Helical transmembrane passes span 46-69 (IFASHFGQLAIIFLWTSGNLFHVA), 135-158 (LYTGALFLLFLSALSLIGGWLHLQ), 175-199 (LNHHLSGLFGVSSLAWTGHLVHVAI), 273-291 (MAHHHLAIAILFLIAGHMY), 330-353 (IHFQLGLALASLGVITSLVAQHMY), 369-395 (AALYTHHQYIAGFIMTGAFAHGAIFFI), 417-439 (AIISQLSWASLFLGFHTLGLYVH), and 517-535 (FLVHHAIALGLHTTTLILV). Residues Cys559 and Cys568 each contribute to the [4Fe-4S] cluster site. The next 2 helical transmembrane spans lie at 575–596 (AFYLAVFWMLNTIGWVTFYWHW) and 643–665 (LSVWAWMFLFGHLVWATGFMFLI). His654, Met662, and Tyr670 together coordinate chlorophyll a. Phylloquinone is bound at residue Trp671. The helical transmembrane segment at 707–727 (LVGLAHFSVGYIFTYAAFLIA) threads the bilayer.

The protein belongs to the PsaA/PsaB family. As to quaternary structure, the PsaA/B heterodimer binds the P700 chlorophyll special pair and subsequent electron acceptors. PSI consists of a core antenna complex that captures photons, and an electron transfer chain that converts photonic excitation into a charge separation. The eukaryotic PSI reaction center is composed of at least 11 subunits. Requires P700 is a chlorophyll a/chlorophyll a' dimer, A0 is one or more chlorophyll a, A1 is one or both phylloquinones and FX is a shared 4Fe-4S iron-sulfur center. as cofactor.

Its subcellular location is the plastid. It is found in the chloroplast thylakoid membrane. The catalysed reaction is reduced [plastocyanin] + hnu + oxidized [2Fe-2S]-[ferredoxin] = oxidized [plastocyanin] + reduced [2Fe-2S]-[ferredoxin]. Its function is as follows. PsaA and PsaB bind P700, the primary electron donor of photosystem I (PSI), as well as the electron acceptors A0, A1 and FX. PSI is a plastocyanin-ferredoxin oxidoreductase, converting photonic excitation into a charge separation, which transfers an electron from the donor P700 chlorophyll pair to the spectroscopically characterized acceptors A0, A1, FX, FA and FB in turn. Oxidized P700 is reduced on the lumenal side of the thylakoid membrane by plastocyanin. This chain is Photosystem I P700 chlorophyll a apoprotein A2, found in Draba nemorosa (Woodland whitlowgrass).